The sequence spans 610 residues: UvrABC system protein C (610 aa).

Residues 16-94 form the GIY-YIG domain; it reads SQPGVYRMYD…IKLYQPRYNV (79 aa). The UVR domain occupies 204 to 239; sequence DQVLTQLIARMEKASQDLAFEEAARIRDQIQAVRRV.

This sequence belongs to the UvrC family. As to quaternary structure, interacts with UvrB in an incision complex.

Its subcellular location is the cytoplasm. Its function is as follows. The UvrABC repair system catalyzes the recognition and processing of DNA lesions. UvrC both incises the 5' and 3' sides of the lesion. The N-terminal half is responsible for the 3' incision and the C-terminal half is responsible for the 5' incision. The chain is UvrABC system protein C from Salmonella typhimurium (strain LT2 / SGSC1412 / ATCC 700720).